The following is a 97-amino-acid chain: Co-chaperonin GroES (97 aa).

Belongs to the GroES chaperonin family. As to quaternary structure, heptamer of 7 subunits arranged in a ring. Interacts with the chaperonin GroEL.

It is found in the cytoplasm. Functionally, together with the chaperonin GroEL, plays an essential role in assisting protein folding. The GroEL-GroES system forms a nano-cage that allows encapsulation of the non-native substrate proteins and provides a physical environment optimized to promote and accelerate protein folding. GroES binds to the apical surface of the GroEL ring, thereby capping the opening of the GroEL channel. The chain is Co-chaperonin GroES from Buchnera aphidicola subsp. Tuberolachnus salignus.